Consider the following 336-residue polypeptide: Carbamoyl dehydratase HypE (336 aa).

Cys-336 is modified (S-carbamoylcysteine; by HypF; alternate). At Cys-336 the chain carries S-cyanocysteine; by autocatalysis; alternate.

This sequence belongs to the HypE family. As to quaternary structure, homodimer. Forms a complex with HypF. Also forms a complex with HypC, or HybG, and HypD. Modified by HypF, which adds a carboxamido group to the thiolate of the C-terminal cysteine, yielding a protein-S-carboxamide. The carboxamido group is then dehydrated by HypE itself to yield a protein-thiocyanate.

The enzyme catalyses C-terminal S-carboxamide-L-cysteinyl-[HypE protein] + ATP = C-terminal S-cyanate-L-cysteinyl-[HypE protein] + ADP + phosphate + H(+). It functions in the pathway protein modification; [NiFe] hydrogenase maturation. In terms of biological role, involved in the maturation of [NiFe] hydrogenases. Along with HypF, it catalyzes the synthesis of the CN ligands of the active site iron of [NiFe]-hydrogenases. HypE catalyzes the ATP-dependent dehydration of the carboxamido group attached to its C-terminal cysteine to a cyano group. The cyano group is then transferred from HypE to the HypC-HypD complex or the HybG-HypD complex. This is Carbamoyl dehydratase HypE from Escherichia coli (strain K12).